Consider the following 227-residue polypeptide: 7-cyano-7-deazaguanine synthase (227 aa).

Leu-9–Leu-19 provides a ligand contact to ATP. The Zn(2+) site is built by Cys-189, Cys-199, Cys-202, and Cys-205.

Belongs to the QueC family. The cofactor is Zn(2+).

The catalysed reaction is 7-carboxy-7-deazaguanine + NH4(+) + ATP = 7-cyano-7-deazaguanine + ADP + phosphate + H2O + H(+). Its pathway is purine metabolism; 7-cyano-7-deazaguanine biosynthesis. Its function is as follows. Catalyzes the ATP-dependent conversion of 7-carboxy-7-deazaguanine (CDG) to 7-cyano-7-deazaguanine (preQ(0)). The protein is 7-cyano-7-deazaguanine synthase of Cupriavidus metallidurans (strain ATCC 43123 / DSM 2839 / NBRC 102507 / CH34) (Ralstonia metallidurans).